The following is a 365-amino-acid chain: GTPase Obg (365 aa).

The 159-residue stretch at 2–160 folds into the Obg domain; that stretch reads ESFVDEVAIE…KFLRLSLKLL (159 aa). The 169-residue stretch at 161-329 folds into the OBG-type G domain; sequence ADVGIVGLPN…LLEAMDEAFF (169 aa). Residues 167-174, 192-196, 215-218, 282-285, and 310-312 each bind GTP; these read GLPNAGKS, FTTLS, DIPG, NKID, and SAD. Mg(2+) is bound by residues Ser174 and Thr194.

The protein belongs to the TRAFAC class OBG-HflX-like GTPase superfamily. OBG GTPase family. As to quaternary structure, monomer. It depends on Mg(2+) as a cofactor.

It localises to the cytoplasm. In terms of biological role, an essential GTPase which binds GTP, GDP and possibly (p)ppGpp with moderate affinity, with high nucleotide exchange rates and a fairly low GTP hydrolysis rate. Plays a role in control of the cell cycle, stress response, ribosome biogenesis and in those bacteria that undergo differentiation, in morphogenesis control. The protein is GTPase Obg of Leptospira borgpetersenii serovar Hardjo-bovis (strain JB197).